The chain runs to 149 residues: Cytochrome c-type biogenesis protein CcmE (149 aa).

Residues 1–7 (MKARHKR) are Cytoplasmic-facing. The chain crosses the membrane as a helical; Signal-anchor for type II membrane protein span at residues 8–28 (LGLIVAGLAALGLGAALVLSA). Over 29-149 (FQKNLVFFFT…GAPALAGALK (121 aa)) the chain is Periplasmic. Positions 123 and 127 each coordinate heme.

This sequence belongs to the CcmE/CycJ family.

The protein localises to the cell inner membrane. Functionally, heme chaperone required for the biogenesis of c-type cytochromes. Transiently binds heme delivered by CcmC and transfers the heme to apo-cytochromes in a process facilitated by CcmF and CcmH. This Polaromonas naphthalenivorans (strain CJ2) protein is Cytochrome c-type biogenesis protein CcmE.